The primary structure comprises 491 residues: Protein nucleotidyltransferase YdiU (491 aa).

Residues G94, G96, R97, K117, D129, G130, R180, and R187 each contribute to the ATP site. Residue D256 is the Proton acceptor of the active site. Positions 257 and 266 each coordinate Mg(2+). ATP is bound at residue D266.

It belongs to the SELO family. Mg(2+) is required as a cofactor. Mn(2+) serves as cofactor.

The catalysed reaction is L-seryl-[protein] + ATP = 3-O-(5'-adenylyl)-L-seryl-[protein] + diphosphate. It carries out the reaction L-threonyl-[protein] + ATP = 3-O-(5'-adenylyl)-L-threonyl-[protein] + diphosphate. It catalyses the reaction L-tyrosyl-[protein] + ATP = O-(5'-adenylyl)-L-tyrosyl-[protein] + diphosphate. The enzyme catalyses L-histidyl-[protein] + UTP = N(tele)-(5'-uridylyl)-L-histidyl-[protein] + diphosphate. The catalysed reaction is L-seryl-[protein] + UTP = O-(5'-uridylyl)-L-seryl-[protein] + diphosphate. It carries out the reaction L-tyrosyl-[protein] + UTP = O-(5'-uridylyl)-L-tyrosyl-[protein] + diphosphate. Its function is as follows. Nucleotidyltransferase involved in the post-translational modification of proteins. It can catalyze the addition of adenosine monophosphate (AMP) or uridine monophosphate (UMP) to a protein, resulting in modifications known as AMPylation and UMPylation. In Alkaliphilus metalliredigens (strain QYMF), this protein is Protein nucleotidyltransferase YdiU.